The following is a 252-amino-acid chain: Methionine aminopeptidase (252 aa).

Position 76 (histidine 76) interacts with substrate. A divalent metal cation contacts are provided by aspartate 93, aspartate 104, and histidine 168. Histidine 175 contacts substrate. A divalent metal cation-binding residues include glutamate 202 and glutamate 233.

This sequence belongs to the peptidase M24A family. Methionine aminopeptidase type 1 subfamily. Monomer. Co(2+) serves as cofactor. It depends on Zn(2+) as a cofactor. Mn(2+) is required as a cofactor. The cofactor is Fe(2+).

The catalysed reaction is Release of N-terminal amino acids, preferentially methionine, from peptides and arylamides.. Functionally, removes the N-terminal methionine from nascent proteins. The N-terminal methionine is often cleaved when the second residue in the primary sequence is small and uncharged (Met-Ala-, Cys, Gly, Pro, Ser, Thr, or Val). Requires deformylation of the N(alpha)-formylated initiator methionine before it can be hydrolyzed. The chain is Methionine aminopeptidase from Staphylococcus aureus (strain MRSA252).